The primary structure comprises 508 residues: Photosystem II CP47 reaction center protein (508 aa).

6 consecutive transmembrane segments (helical) span residues 21–36 (SVHI…WAGS), 101–115 (IMFS…IWHW), 140–156 (GIHL…FGAF), 203–218 (IAAG…FHLS), 237–252 (VLSS…AFVV), and 457–472 (SFAL…HGAR).

This sequence belongs to the PsbB/PsbC family. PsbB subfamily. PSII is composed of 1 copy each of membrane proteins PsbA, PsbB, PsbC, PsbD, PsbE, PsbF, PsbH, PsbI, PsbJ, PsbK, PsbL, PsbM, PsbT, PsbX, PsbY, PsbZ, Psb30/Ycf12, at least 3 peripheral proteins of the oxygen-evolving complex and a large number of cofactors. It forms dimeric complexes. It depends on Binds multiple chlorophylls. PSII binds additional chlorophylls, carotenoids and specific lipids. as a cofactor.

The protein resides in the plastid. It is found in the chloroplast thylakoid membrane. In terms of biological role, one of the components of the core complex of photosystem II (PSII). It binds chlorophyll and helps catalyze the primary light-induced photochemical processes of PSII. PSII is a light-driven water:plastoquinone oxidoreductase, using light energy to abstract electrons from H(2)O, generating O(2) and a proton gradient subsequently used for ATP formation. The chain is Photosystem II CP47 reaction center protein from Ceratophyllum demersum (Rigid hornwort).